A 511-amino-acid polypeptide reads, in one-letter code: Maturase K (511 aa).

It belongs to the intron maturase 2 family. MatK subfamily.

It is found in the plastid. The protein localises to the chloroplast. Usually encoded in the trnK tRNA gene intron. Probably assists in splicing its own and other chloroplast group II introns. The protein is Maturase K of Primula veris (Cowslip).